The chain runs to 471 residues: MTQTAPSSLRSLPPEGAATTNLLDTLQRGLAELDAQGLRRVRRTADTACDAHMRVDGRDIVGFASNDYLGLAAHPALVAAFAEGARRYGSGSGGSHLLGGHSRAHATLEDELAGFAGGFSDAPRALYFSTGYMANLAAMTALTGKHATIFSDALNHASLIDGMRLSRANVQVYPHADMAALAALLDASDAETKLIVSDTVFSMDGDIAPLAELVALAERHGAWLVVDDAHGFGVLGPQGRGALAAAALRSPNLIYVGTLGKAAGVAGAFVIAHETVIEWMIQRARSYIFTTAAPPAVAHAVSASLKVIAGDEGDARRAHLAALIERTRALLRMTRWQPVDSHTAVQPLVIGSNDATLAAMRSLDAHGLWVPAIRPPTVPVGTSRLRVSLSAAHSFDDLARLEAALIEASEGQTRREAEQPPRSLRSLPPEGAAVSVGAARRDAEQPPRSLRSLPPEGAAASLGAARRETAA.

A substrate-binding site is contributed by R40. 131–132 serves as a coordination point for pyridoxal 5'-phosphate; sequence GY. H156 serves as a coordination point for substrate. The pyridoxal 5'-phosphate site is built by S202, H230, and T258. K261 carries the N6-(pyridoxal phosphate)lysine modification. T377 serves as a coordination point for substrate. Residues 409–471 are disordered; it reads SEGQTRREAE…LGAARRETAA (63 aa).

Belongs to the class-II pyridoxal-phosphate-dependent aminotransferase family. BioF subfamily. In terms of assembly, homodimer. It depends on pyridoxal 5'-phosphate as a cofactor.

It catalyses the reaction 6-carboxyhexanoyl-[ACP] + L-alanine + H(+) = (8S)-8-amino-7-oxononanoate + holo-[ACP] + CO2. The protein operates within cofactor biosynthesis; biotin biosynthesis. In terms of biological role, catalyzes the decarboxylative condensation of pimeloyl-[acyl-carrier protein] and L-alanine to produce 8-amino-7-oxononanoate (AON), [acyl-carrier protein], and carbon dioxide. The polypeptide is 8-amino-7-oxononanoate synthase (Burkholderia ambifaria (strain ATCC BAA-244 / DSM 16087 / CCUG 44356 / LMG 19182 / AMMD) (Burkholderia cepacia (strain AMMD))).